We begin with the raw amino-acid sequence, 213 residues long: Phycocyanobilin lyase subunit beta (213 aa).

Belongs to the CpcE/RpcE/PecE family. In terms of assembly, cpcE and CpcF associate to form a lyase.

Its function is as follows. Required for the chromophorylation of the CpcA gene product. The chain is Phycocyanobilin lyase subunit beta (cpcF) from Thermosynechococcus vestitus (strain NIES-2133 / IAM M-273 / BP-1).